The following is a 21-amino-acid chain: Ocellatin-4 (21 aa).

Ile21 is modified (isoleucine amide).

In terms of tissue distribution, expressed by the skin dorsal glands.

The protein localises to the secreted. Has hemolytic activity against human erythrocytes (HC50=14.3 uM). Has antibacterial activity against the Gram-positive bacterium S.aureus ATCC 25923 (MIC=64 uM) and the Gram-negative bacterium E.coli ATCC 25922 (MIC=64 uM). The chain is Ocellatin-4 from Leptodactylus ocellatus (Argus frog).